The primary structure comprises 78 residues: Large ribosomal subunit protein bL28 (78 aa).

Belongs to the bacterial ribosomal protein bL28 family.

The chain is Large ribosomal subunit protein bL28 from Proteus mirabilis (strain HI4320).